The following is a 122-amino-acid chain: Acyl carrier protein 1, mitochondrial (122 aa).

The transit peptide at 1–34 directs the protein to the mitochondrion; that stretch reads MALRNAILRHLRVPVQTLGLNQSKIGFLGTIRSF. The region spanning 44-119 is the Carrier domain; sequence EAVVDRVLDV…LAIEYVYNHP (76 aa). S79 carries the post-translational modification O-(pantetheine 4'-phosphoryl)serine.

Belongs to the acyl carrier protein (ACP) family. Complex I is composed of at least 49 different subunits. In terms of processing, 4'-phosphopantetheine is transferred from CoA to a specific serine of the apo-ACP-like protein.

Its subcellular location is the mitochondrion. It functions in the pathway lipid metabolism; fatty acid biosynthesis. Carrier of the growing fatty acid chain in fatty acid biosynthesis. May be involved in the synthesis of short and medium chain fatty acids. Accessory and non-catalytic subunit of the mitochondrial membrane respiratory chain NADH dehydrogenase (Complex I), which functions in the transfer of electrons from NADH to the respiratory chain. The sequence is that of Acyl carrier protein 1, mitochondrial (MTACP1) from Arabidopsis thaliana (Mouse-ear cress).